A 278-amino-acid chain; its full sequence is MRAPPSPRKSKSGHFFYLYFRLCQLFSGRKLKRRWHVHKLHIHQYNTRWNLSPLSEIHIEDMINEPSGLCPGSSKKKPLLIARFPKGCQESPRVYVLQRNNLSRLKLSKRKYALRFYHNEIFGNNLKRKDGSIHKVEHQQCAETVRKIKKVTANHADVKIIFHDKNTIRSDKLGGRSNKMQTRPSVLEEDVEEEVSSVYIRFCDDHSLRVKDYHSLHRHSKKSSKEKRNNQEIGKSKLLGKLFEEETSRQNKGVEKKLDTIVIQKFQNYPIVSFSRVI.

The protein localises to the spore wall. Functionally, may be involved in a late step of spore wall assembly. This is Outer spore wall protein 1 (OSW1) from Saccharomyces cerevisiae (strain ATCC 204508 / S288c) (Baker's yeast).